We begin with the raw amino-acid sequence, 237 residues long: Ergosterol biosynthesis protein 29 (237 aa).

A helical membrane pass occupies residues 36–56 (ITLFLIVVGTLAFFNELYITI).

The protein resides in the endoplasmic reticulum membrane. Part of the third module of ergosterol biosynthesis pathway that includes the late steps of the pathway. ERG29 regulates the activity of the iron-containing C4-methylsterol oxidase ERG25. The third module or late pathway involves the ergosterol synthesis itself through consecutive reactions that mainly occur in the endoplasmic reticulum (ER) membrane. Firstly, the squalene synthase ERG9 catalyzes the condensation of 2 farnesyl pyrophosphate moieties to form squalene, which is the precursor of all steroids. Squalene synthase is crucial for balancing the incorporation of farnesyl diphosphate (FPP) into sterol and nonsterol isoprene synthesis. Secondly, the squalene epoxidase ERG1 catalyzes the stereospecific oxidation of squalene to (S)-2,3-epoxysqualene, which is considered to be a rate-limiting enzyme in steroid biosynthesis. Then, the lanosterol synthase ERG7 catalyzes the cyclization of (S)-2,3 oxidosqualene to lanosterol, a reaction that forms the sterol core. In the next steps, lanosterol is transformed to zymosterol through a complex process involving various demethylation, reduction and desaturation reactions. The lanosterol 14-alpha-demethylase ERG11 (also known as CYP51) catalyzes C14-demethylation of lanosterol to produce 4,4'-dimethyl cholesta-8,14,24-triene-3-beta-ol, which is critical for ergosterol biosynthesis. The C-14 reductase ERG24 reduces the C14=C15 double bond of 4,4-dimethyl-cholesta-8,14,24-trienol to produce 4,4-dimethyl-cholesta-8,24-dienol. 4,4-dimethyl-cholesta-8,24-dienol is substrate of the C-4 demethylation complex ERG25-ERG26-ERG27 in which ERG25 catalyzes the three-step monooxygenation required for the demethylation of 4,4-dimethyl and 4alpha-methylsterols, ERG26 catalyzes the oxidative decarboxylation that results in a reduction of the 3-beta-hydroxy group at the C-3 carbon to an oxo group, and ERG27 is responsible for the reduction of the keto group on the C-3. ERG28 has a role as a scaffold to help anchor ERG25, ERG26 and ERG27 to the endoplasmic reticulum and ERG29 regulates the activity of the iron-containing C4-methylsterol oxidase ERG25. Then, the sterol 24-C-methyltransferase ERG6 catalyzes the methyl transfer from S-adenosyl-methionine to the C-24 of zymosterol to form fecosterol. The C-8 sterol isomerase ERG2 catalyzes the reaction which results in unsaturation at C-7 in the B ring of sterols and thus converts fecosterol to episterol. The sterol-C5-desaturase ERG3 then catalyzes the introduction of a C-5 double bond in the B ring to produce 5-dehydroepisterol. The C-22 sterol desaturase ERG5 further converts 5-dehydroepisterol into ergosta-5,7,22,24(28)-tetraen-3beta-ol by forming the C-22(23) double bond in the sterol side chain. Finally, ergosta-5,7,22,24(28)-tetraen-3beta-ol is substrate of the C-24(28) sterol reductase ERG4 to produce ergosterol. Its function is as follows. Plays a role in maintaining mitochondrial and plasma membrane integrity and consequently impacting the iron homeostasis, respiratory metabolism and antioxidant response. This chain is Ergosterol biosynthesis protein 29, found in Saccharomyces cerevisiae (strain ATCC 204508 / S288c) (Baker's yeast).